Consider the following 353-residue polypeptide: Lipase chaperone (353 aa).

Residues 12–32 (IVLYLILGCVVVCGVWYSFDV) traverse the membrane as a helical segment.

It belongs to the lipase chaperone family.

It localises to the cell inner membrane. In terms of biological role, may be involved in the folding of the extracellular lipase during its passage through the periplasm. The sequence is that of Lipase chaperone from Xylella fastidiosa (strain M23).